A 299-amino-acid chain; its full sequence is Craniofacial development protein 1 (299 aa).

Acidic residues-rich tracts occupy residues 1–18 (MEEF…DEDY) and 25–43 (YSED…DGEE). Disordered stretches follow at residues 1 to 156 (MEEF…ELEK) and 192 to 224 (FFKQ…SSGM). Over residues 49 to 65 (QGKKRKAQSIPARKRRQ) the composition is skewed to basic residues. The segment covering 70 to 94 (LEEEEEEDANSESEGSSSEEEDDAA) has biased composition (acidic residues). Residues serine 82, serine 85, and serine 86 each carry the phosphoserine modification. A compositionally biased stretch (basic and acidic residues) spans 95–112 (EQEKGIGSEDARKKKEDE). Serine 116 is subject to Phosphoserine. Residue lysine 150 forms a Glycyl lysine isopeptide (Lys-Gly) (interchain with G-Cter in SUMO2) linkage. Residues 178-217 (VTKEVDATSKEAKSFFKQNEKEKPQANVPSALPSLPAGSG) form a hydrophilic region. The segment covering 192-201 (FFKQNEKEKP) has biased composition (basic and acidic residues). Serine 216 is modified (phosphoserine). Residues 218–299 (LKRSSGMSSL…RDLRLSKMKP (82 aa)) form the BCNT-C domain. Residue lysine 219 is modified to N6-methyllysine. A Phosphoserine modification is found at serine 250.

In terms of processing, phosphorylated by CK2 (casein kinase II) in vitro. In terms of tissue distribution, ubiquitous.

The protein localises to the chromosome. Its subcellular location is the centromere. It is found in the kinetochore. Its function is as follows. May play a role during embryogenesis. The chain is Craniofacial development protein 1 (CFDP1) from Homo sapiens (Human).